A 278-amino-acid chain; its full sequence is HTH-type transcriptional activator RhaS (278 aa).

The 99-residue stretch at 174–272 (NLLLAWLEDH…NWSPRDIRQG (99 aa)) folds into the HTH araC/xylS-type domain. DNA-binding regions (H-T-H motif) lie at residues 191 to 212 (DAVA…KQQT) and 239 to 262 (VTDI…RREF).

Binds DNA as a dimer.

It is found in the cytoplasm. Activates expression of the rhaBAD and rhaT operons. This Escherichia coli (strain SE11) protein is HTH-type transcriptional activator RhaS.